The primary structure comprises 244 residues: MFSLKMRASSNGNHVSGAERLVKEEQIEEISSELIKRAMNHENGVPDFINLKVEKVTENINYIEHLKIKTINSNSKETSREFAINILKKELENYFLKNGKDTKKIDELIDSAFKIIDAGNMRGAAILDLDGNRLEKSSDRGIRVRNIDTAEELSKKILKDGSLTERTVDAIAIATKVVNCDIIAELCTSDNFSYTTGYVATKDGYFRILNLKDSGQVGGRVFFAESSDIDELYDKLENMPVIVY.

The protein belongs to the BioW family. As to quaternary structure, homodimer. Mg(2+) is required as a cofactor.

It carries out the reaction heptanedioate + ATP + CoA = 6-carboxyhexanoyl-CoA + AMP + diphosphate. The protein operates within metabolic intermediate metabolism; pimeloyl-CoA biosynthesis; pimeloyl-CoA from pimelate: step 1/1. In terms of biological role, catalyzes the transformation of pimelate into pimeloyl-CoA with concomitant hydrolysis of ATP to AMP. This is 6-carboxyhexanoate--CoA ligase from Methanococcus maripaludis (strain DSM 14266 / JCM 13030 / NBRC 101832 / S2 / LL).